Here is a 580-residue protein sequence, read N- to C-terminus: F-box only protein 24 (580 aa).

One can recognise an F-box domain in the interval 36 to 82 (PISIQLFPPELVEHIISFLPVRDLVALGQTCRYFHEVCDGEGVWRRI). An RCC1 repeat occupies 376-425 (GRIFMQGNNRYGQLGTGDKMDRGEPTQVCYLQRPITLWCGLNHSLVLSQS).

In terms of assembly, directly interacts with SKP1 and CUL1.

Its function is as follows. Substrate-recognition component of the SCF (SKP1-CUL1-F-box protein)-type E3 ubiquitin ligase complex. The polypeptide is F-box only protein 24 (FBXO24) (Homo sapiens (Human)).